Here is a 405-residue protein sequence, read N- to C-terminus: S-arrestin (405 aa).

Thr-234 is subject to Phosphothreonine.

This sequence belongs to the arrestin family. As to quaternary structure, monomer. Homodimer. Homotetramer. Interacts with RHO (via the phosphorylated C-terminus).

The protein resides in the cell projection. It localises to the cilium. It is found in the photoreceptor outer segment. Its subcellular location is the membrane. Functionally, binds to photoactivated, phosphorylated RHO and terminates RHO signaling via G-proteins by competing with G-proteins for the same binding site on RHO. May play a role in preventing light-dependent degeneration of retinal photoreceptor cells. This is S-arrestin (SAG) from Canis lupus familiaris (Dog).